The primary structure comprises 162 residues: ATP synthase subunit b 1 (162 aa).

The helical transmembrane segment at 1–21 (MLLTAEFWVAVAFVAFLVIVW) threads the bilayer.

This sequence belongs to the ATPase B chain family. F-type ATPases have 2 components, F(1) - the catalytic core - and F(0) - the membrane proton channel. F(1) has five subunits: alpha(3), beta(3), gamma(1), delta(1), epsilon(1). F(0) has three main subunits: a(1), b(2) and c(10-14). The alpha and beta chains form an alternating ring which encloses part of the gamma chain. F(1) is attached to F(0) by a central stalk formed by the gamma and epsilon chains, while a peripheral stalk is formed by the delta and b chains.

The protein localises to the cell inner membrane. In terms of biological role, f(1)F(0) ATP synthase produces ATP from ADP in the presence of a proton or sodium gradient. F-type ATPases consist of two structural domains, F(1) containing the extramembraneous catalytic core and F(0) containing the membrane proton channel, linked together by a central stalk and a peripheral stalk. During catalysis, ATP synthesis in the catalytic domain of F(1) is coupled via a rotary mechanism of the central stalk subunits to proton translocation. Functionally, component of the F(0) channel, it forms part of the peripheral stalk, linking F(1) to F(0). This is ATP synthase subunit b 1 from Methylorubrum populi (strain ATCC BAA-705 / NCIMB 13946 / BJ001) (Methylobacterium populi).